A 157-amino-acid polypeptide reads, in one-letter code: UPF0225 protein PMI1492 (157 aa).

This sequence belongs to the UPF0225 family.

This chain is UPF0225 protein PMI1492, found in Proteus mirabilis (strain HI4320).